The following is a 153-amino-acid chain: Ribosome maturation factor RimP (153 aa).

Belongs to the RimP family.

The protein resides in the cytoplasm. Required for maturation of 30S ribosomal subunits. In Solibacter usitatus (strain Ellin6076), this protein is Ribosome maturation factor RimP.